We begin with the raw amino-acid sequence, 584 residues long: Alkaline nuclease (584 aa).

The segment at 409–429 (GGGADHHLRGSPGDSPPPIPF) is disordered.

This sequence belongs to the herpesviridae alkaline nuclease family. Interacts with major DNA-binding protein; this interaction increases the nuclease processivity of the alkaline exonuclease.

The protein localises to the host nucleus. The protein resides in the host cytoplasm. Its function is as follows. Plays a role in processing non linear or branched viral DNA intermediates in order to promote the production of mature packaged unit-length linear progeny viral DNA molecules. Exhibits endonuclease and exonuclease activities and accepts both double-stranded and single-stranded DNA as substrate. Exonuclease digestion of DNA is in the 5'-&gt; 3' direction and the products are 5'-monophosphate nucleosides. Additionally, forms a recombinase with the major DNA-binding protein, which displays strand exchange activity. This is Alkaline nuclease (UL98) from Homo sapiens (Human).